A 469-amino-acid polypeptide reads, in one-letter code: ATP-dependent protease ATPase subunit HslU (469 aa).

Residues I24, 66–71 (GVGKTE), D282, E347, and R419 contribute to the ATP site.

This sequence belongs to the ClpX chaperone family. HslU subfamily. As to quaternary structure, a double ring-shaped homohexamer of HslV is capped on each side by a ring-shaped HslU homohexamer. The assembly of the HslU/HslV complex is dependent on binding of ATP.

It localises to the cytoplasm. Functionally, ATPase subunit of a proteasome-like degradation complex; this subunit has chaperone activity. The binding of ATP and its subsequent hydrolysis by HslU are essential for unfolding of protein substrates subsequently hydrolyzed by HslV. HslU recognizes the N-terminal part of its protein substrates and unfolds these before they are guided to HslV for hydrolysis. This is ATP-dependent protease ATPase subunit HslU from Listeria monocytogenes serotype 4a (strain HCC23).